The primary structure comprises 90 residues: WAP four-disulfide core domain protein 12 (90 aa).

The first 23 residues, 1-23 (MGSSSFLVLMVSLALVTLVAVEG), serve as a signal peptide directing secretion. Residues 27 to 74 (GIEKAGVCPADNVRCFKSDPPQCHTDQDCLGERKCCYLHCGFKCVIPV) form the WAP domain. 4 cysteine pairs are disulfide-bonded: Cys-34/Cys-62, Cys-41/Cys-66, Cys-49/Cys-61, and Cys-55/Cys-70.

The protein resides in the secreted. Functionally, antibacterial protein. Putative acid-stable proteinase inhibitor. The polypeptide is WAP four-disulfide core domain protein 12 (WFDC12) (Pongo abelii (Sumatran orangutan)).